The following is a 2364-amino-acid chain: Spectrin beta chain, non-erythrocytic 1 (2364 aa).

At T2 the chain carries N-acetylthreonine. The tract at residues 2-275 (TTTVATDYDN…IITYVVTYYH (274 aa)) is actin-binding. I14 and S36 each carry phosphoserine. Calponin-homology (CH) domains follow at residues 54–158 (AVQK…LRFQ) and 173–278 (KSAK…HYFS). An N6-acetyllysine modification is found at K90. S228 carries the phosphoserine modification. Spectrin repeat units lie at residues 303 to 411 (MIEK…LALR), 423 to 525 (LARR…QRLE), 530 to 636 (LQKI…RLEE), 639 to 742 (RLWK…RLEE), 745 to 847 (LLHQ…ALQD), 850 to 952 (ALYK…DALL), 957 to 1060 (IQNY…SLGE), 1063 to 1166 (KLQQ…NLLS), 1170 to 1258 (AYQQ…DRHR), 1276 to 1376 (DLQK…AQRL), 1381 to 1482 (KAEL…HNLL), 1486 to 1590 (EIHQ…RLEE), 1592 to 1696 (HRAQ…KLDE), 1698 to 1801 (HRLF…TQIL), and 1805 to 1907 (YELH…RVRL). Residues S817, S825, S903, S1057, S1076, S1079, and S1237 each carry the phosphoserine modification. S1388, S1447, and S1557 each carry phosphoserine. Positions 1563–2093 (IRQRLADLKQ…LLEVRRQQEE (531 aa)) are interaction with ANK2. The residue at position 1805 (Y1805) is a Phosphotyrosine. An N6-acetyllysine mark is found at K1815, K1913, and K1989. Spectrin repeat units lie at residues 1914 to 2014 (FRFF…EWLR) and 2018 to 2097 (EVHQ…EERK). The interval 2089 to 2196 (RQQEEEERKR…TLPARTQETP (108 aa)) is disordered. 3 positions are modified to phosphoserine: S2102, S2128, and S2138. Positions 2115–2131 (SQQQWDTSKGEQVSQNG) are enriched in polar residues. The span at 2145–2166 (VDTSEMVNGATEQRTSSKESSP) shows a compositional bias: polar residues. T2147 carries the post-translational modification Phosphothreonine. The residue at position 2148 (S2148) is a Phosphoserine. The tract at residues 2149–2177 (EMVNGATEQRTSSKESSPIPSPTSDRKAK) is mediates interaction with CAMSAP1. Position 2159 is a phosphothreonine (T2159). Phosphoserine occurs at positions 2160, 2161, 2164, 2165, and 2169. Phosphothreonine is present on T2171. Phosphoserine occurs at positions 2172 and 2184. Polar residues predominate over residues 2184-2196 (SAATLPARTQETP). 2 positions are modified to phosphothreonine: T2187 and T2195. The region spanning 2197-2307 (SAQMEGFLNR…WIQAISSAIS (111 aa)) is the PH domain. Positions 2309-2364 (DKHEVSASTQSTPASSRAQTLPTSVVTITSESSPGKREKDKEKDKEKRFSLFGKKK) are disordered. Phosphoserine is present on residues S2314 and S2319. A compositionally biased stretch (polar residues) spans 2314–2341 (SASTQSTPASSRAQTLPTSVVTITSESS). The residue at position 2320 (T2320) is a Phosphothreonine. Residue S2324 is glycosylated (O-linked (GlcNAc) serine). T2328 is subject to Phosphothreonine. S2340 and S2341 each carry phosphoserine. Positions 2342–2357 (PGKREKDKEKDKEKRF) are enriched in basic and acidic residues.

This sequence belongs to the spectrin family. In terms of assembly, interacts with CAMSAP1. Interacts with ANK2. Interacts with CPNE4 (via VWFA domain). Like erythrocyte spectrin, the spectrin-like proteins are capable to form dimers which can further associate to tetramers. Can form heterodimers with SPTAN1. Isoform Short cannot bind to the axonal protein fodaxin. As to expression, isoform 2 is present in brain, lung and kidney (at protein level).

The protein localises to the cytoplasm. The protein resides in the cytoskeleton. Its subcellular location is the myofibril. It localises to the sarcomere. It is found in the m line. The protein localises to the cytosol. The protein resides in the cell membrane. In terms of biological role, fodrin, which seems to be involved in secretion, interacts with calmodulin in a calcium-dependent manner and is thus candidate for the calcium-dependent movement of the cytoskeleton at the membrane. Plays a critical role in central nervous system development and function. The chain is Spectrin beta chain, non-erythrocytic 1 (SPTBN1) from Homo sapiens (Human).